The sequence spans 171 residues: Adenine phosphoribosyltransferase (171 aa).

It belongs to the purine/pyrimidine phosphoribosyltransferase family. Homodimer.

The protein resides in the cytoplasm. The enzyme catalyses AMP + diphosphate = 5-phospho-alpha-D-ribose 1-diphosphate + adenine. The protein operates within purine metabolism; AMP biosynthesis via salvage pathway; AMP from adenine: step 1/1. Its function is as follows. Catalyzes a salvage reaction resulting in the formation of AMP, that is energically less costly than de novo synthesis. The protein is Adenine phosphoribosyltransferase of Synechococcus sp. (strain ATCC 27144 / PCC 6301 / SAUG 1402/1) (Anacystis nidulans).